The following is a 556-amino-acid chain: 2-succinyl-5-enolpyruvyl-6-hydroxy-3-cyclohexene-1-carboxylate synthase (556 aa).

It belongs to the TPP enzyme family. MenD subfamily. As to quaternary structure, homodimer. Requires Mg(2+) as cofactor. The cofactor is Mn(2+). Thiamine diphosphate serves as cofactor.

The catalysed reaction is isochorismate + 2-oxoglutarate + H(+) = 5-enolpyruvoyl-6-hydroxy-2-succinyl-cyclohex-3-ene-1-carboxylate + CO2. It functions in the pathway quinol/quinone metabolism; 1,4-dihydroxy-2-naphthoate biosynthesis; 1,4-dihydroxy-2-naphthoate from chorismate: step 2/7. It participates in quinol/quinone metabolism; menaquinone biosynthesis. In terms of biological role, catalyzes the thiamine diphosphate-dependent decarboxylation of 2-oxoglutarate and the subsequent addition of the resulting succinic semialdehyde-thiamine pyrophosphate anion to isochorismate to yield 2-succinyl-5-enolpyruvyl-6-hydroxy-3-cyclohexene-1-carboxylate (SEPHCHC). This chain is 2-succinyl-5-enolpyruvyl-6-hydroxy-3-cyclohexene-1-carboxylate synthase, found in Salmonella paratyphi C (strain RKS4594).